The primary structure comprises 495 residues: Formin-like protein 17 (495 aa).

Positions 1–92 (MDIRELIDIT…HNLKGQGQTR (92 aa)) are disordered. Over residues 19 to 29 (GPPPPPPPPLL) the composition is skewed to pro residues. Positions 30–39 (QPHHSALSSS) are enriched in low complexity. The FH2 domain maps to 86-486 (KGQGQTRKAN…RAQKEAENEK (401 aa)).

It belongs to the formin-like family. Class-II subfamily.

This Arabidopsis thaliana (Mouse-ear cress) protein is Formin-like protein 17 (FH17).